Consider the following 269-residue polypeptide: Protein OPG079 (269 aa).

It belongs to the orthopoxvirus OPG079 family. Homoomultimer (Potential). Interacts with the small subunit of ribonucleotide reductase. Interacts with host FAM111A; this interaction protomtes OPG079 degradation through autophagy.

It is found in the host cytoplasm. Plays an essential role in viral DNA replication. Binds to ssDNA with high affinity and localizes to cytoplasmic factories where nascent viral genomes accumulate. May disrupt loops, hairpins and other secondary structures present on ssDNA to reduce and eliminate pausing of viral DNA polymerase at specific sites during elongation. The polypeptide is Protein OPG079 (OPG079) (Vaccinia virus (strain Copenhagen) (VACV)).